The following is a 1239-amino-acid chain: GRB10-interacting GYF protein 2 (1239 aa).

Disordered stretches follow at residues 105 to 184 (TNRG…GVRG) and 206 to 409 (DERG…IVPA). Basic and acidic residues predominate over residues 153–181 (GAREMHRSQSWEERGDRRFEKPARKEPDG). Acidic residues predominate over residues 231 to 240 (CLDDAEDETG). Residues 241–252 (TFDSSGAFLSSK) are compositionally biased toward polar residues. Basic and acidic residues-rich tracts occupy residues 257–272 (VQKE…DFHP) and 318–331 (PDHK…RTDM). Residues 488–536 (QQKWYYKDPQGEIQGPFSNREMAEWYQAGYFPMTLLLRRVCDETFQPLG) form the GYF domain. Over residues 678 to 737 (DKVKAAKMEQERREAELRAKQEEEEQHRRKEAEEERKRREEEELARRKQEEALQRQKELA) the composition is skewed to basic and acidic residues. Disordered regions lie at residues 678–749 (DKVK…ERQR), 763–812 (EEER…RQLE), 843–960 (AEEE…KPTG), and 1057–1085 (APRN…KVEQ). The segment covering 843 to 862 (AEEEERNKREEAQRQKELQR) has biased composition (basic and acidic residues). Residues 863–885 (QRQQQQEALRRLQLQQQQQQLAQ) are compositionally biased toward low complexity. Residues 888 to 900 (LPSSSTWGQQVTP) are compositionally biased toward polar residues. Low complexity predominate over residues 901-913 (SAASQSALSLAEI). Residues 914–933 (QKLEEERERQKLQEQRHQQQ) are compositionally biased toward basic and acidic residues. 2 stretches are compositionally biased toward low complexity: residues 934 to 948 (ELKA…QQQK) and 1060 to 1077 (NATS…GSNS).

The protein belongs to the GIGYF family. In terms of assembly, component of the 4EHP-GYF2 complex.

Key component of the 4EHP-GYF2 complex, a multiprotein complex that acts as a repressor of translation initiation. In association with EIF4E2, assists ribosome-associated quality control (RQC) by sequestering the mRNA cap, blocking ribosome initiation and decreasing the translational load on problematic messages. In Xenopus laevis (African clawed frog), this protein is GRB10-interacting GYF protein 2 (gigyf2).